The sequence spans 557 residues: Dicarboxylate transporter 1, chloroplastic (557 aa).

The N-terminal 69 residues, 1 to 69, are a transit peptide targeting the chloroplast; the sequence is MASLALSGSC…STLVKASSTV (69 aa). The next 12 helical transmembrane spans lie at 90–110, 122–142, 158–178, 229–249, 256–276, 305–325, 355–375, 376–396, 411–431, 438–458, 477–497, and 531–551; these read AAIK…FVPV, LAIF…LGAV, FAAA…LAFF, AGGI…SNVG, LGSW…SMFL, AAIV…YLIY, IMAA…KLGV, DAVT…VVTW, WFAA…IEWF, FVGG…LLYF, AFLS…LVLA, and YGFL…GAWW.

It belongs to the SLC13A/DASS transporter (TC 2.A.47) family. DIT1 subfamily. In terms of tissue distribution, expressed in roots, rosette and cauline leaves, stems, flowers and siliques.

Its subcellular location is the plastid. It localises to the chloroplast inner membrane. Its function is as follows. 2-oxoglutarate/malate translocator involved with DIT2-1 in primary ammonia assimilation and in the re-assimilation of ammonia generated by the photorespiratory pathway. Imports 2-oxoglutarate into plastids as precursor for ammonia assimilation. 2-oxoglutarate is converted to glutamate, the end product of ammonia assimilation, which is exported to the cytosol by DIT2-1. This is Dicarboxylate transporter 1, chloroplastic (DIT1) from Arabidopsis thaliana (Mouse-ear cress).